Reading from the N-terminus, the 124-residue chain is Small ribosomal subunit protein uS13 (124 aa).

Residues 95–124 (GLPVRGQRTKTNARTRKGPKRTVAGKKKAR) are disordered.

This sequence belongs to the universal ribosomal protein uS13 family. In terms of assembly, part of the 30S ribosomal subunit. Forms a loose heterodimer with protein S19. Forms two bridges to the 50S subunit in the 70S ribosome.

Located at the top of the head of the 30S subunit, it contacts several helices of the 16S rRNA. In the 70S ribosome it contacts the 23S rRNA (bridge B1a) and protein L5 of the 50S subunit (bridge B1b), connecting the 2 subunits; these bridges are implicated in subunit movement. Contacts the tRNAs in the A and P-sites. In Leifsonia xyli subsp. xyli (strain CTCB07), this protein is Small ribosomal subunit protein uS13.